We begin with the raw amino-acid sequence, 1164 residues long: Protein PLASTID MOVEMENT IMPAIRED 1-RELATED 1 (1164 aa).

Residues lysine 30–glutamate 54 are disordered. A compositionally biased stretch (polar residues) spans alanine 37–asparagine 51. Positions isoleucine 69–valine 217 constitute a C2 NT-type domain. A compositionally biased stretch (polar residues) spans proline 224–serine 263. 4 disordered regions span residues proline 224–tyrosine 268, alanine 466–alanine 486, serine 1038–glutamate 1063, and glycine 1124–lysine 1164. Composition is skewed to basic and acidic residues over residues glutamate 469–alanine 486 and serine 1052–glutamate 1062.

It localises to the cytoplasm. Together with PMI1, necessary for chloroplast and nuclear photorelocation movements via the regulation of chloroplast-actin (cp-actin) filaments in pavement cells. The sequence is that of Protein PLASTID MOVEMENT IMPAIRED 1-RELATED 1 from Arabidopsis thaliana (Mouse-ear cress).